Here is a 683-residue protein sequence, read N- to C-terminus: Methionine--tRNA ligase (683 aa).

The short motif at 15–25 (PYANGPIHLGH) is the 'HIGH' region element. The Zn(2+) site is built by Cys-146, Cys-149, Cys-159, and Cys-162. The 'KMSKS' region signature appears at 332-336 (KMSKS). Residue Lys-335 participates in ATP binding. The tRNA-binding domain occupies 581 to 683 (DFCKVDLRVA…AGAKAGQRVK (103 aa)).

Belongs to the class-I aminoacyl-tRNA synthetase family. MetG type 1 subfamily. Homodimer. Zn(2+) serves as cofactor.

It localises to the cytoplasm. It carries out the reaction tRNA(Met) + L-methionine + ATP = L-methionyl-tRNA(Met) + AMP + diphosphate. Is required not only for elongation of protein synthesis but also for the initiation of all mRNA translation through initiator tRNA(fMet) aminoacylation. The chain is Methionine--tRNA ligase from Histophilus somni (strain 2336) (Haemophilus somnus).